The chain runs to 943 residues: Aconitate hydratase A (943 aa).

Residues C479, C545, and C548 each coordinate [4Fe-4S] cluster.

It belongs to the aconitase/IPM isomerase family. In terms of assembly, monomer. The cofactor is [4Fe-4S] cluster.

It catalyses the reaction citrate = D-threo-isocitrate. It carries out the reaction (2S,3R)-3-hydroxybutane-1,2,3-tricarboxylate = 2-methyl-cis-aconitate + H2O. It functions in the pathway carbohydrate metabolism; tricarboxylic acid cycle; isocitrate from oxaloacetate: step 2/2. It participates in organic acid metabolism; propanoate degradation. In terms of biological role, involved in the catabolism of short chain fatty acids (SCFA) via the tricarboxylic acid (TCA)(acetyl degradation route) and probably via the 2-methylcitrate cycle I (propionate degradation route). Catalyzes the reversible isomerization of citrate to isocitrate via cis-aconitate. The apo form of AcnA functions as a RNA-binding regulatory protein which binds to selected IRE-like sequences present within the UTRs (untranslated regions) of 3' trxC and 5' IdeR mRNA. Could catalyze the hydration of 2-methyl-cis-aconitate to yield (2R,3S)-2-methylisocitrate. This chain is Aconitate hydratase A (acn), found in Mycobacterium tuberculosis (strain ATCC 25618 / H37Rv).